The primary structure comprises 548 residues: MASAAVANYEEEIVRPVADFSPSLWGDQFLSFSIKNQVAEKYAKEIEALKEQTRNMLLATGMKLADTLNLIDTIERLGISYHFEKEIDDILDQIYNQNSNCNDLCTSALQFRLLRQHGFNISPEIFSKFQDENGKFKESLASDVLGLLNLYEASHVRTHADDILEDALAFSTIHLESAAPHLKSPLREQVTHALEQCLHKGVPRVETRFFISSIYDKEQSKNNVLLRFAKLDFNLLQMLHKQELAQVSRWWKDLDFVTTLPYARDRVVECYFWALGVYFEPQYSQARVMLVKTISMISIVDDTFDAYGTVKELEAYTDAIQRWDINEIDRLPDYMKISYKAILDLYKDYEKELSSAGRSHIVCHAIERMKEVVRNYNVESTWFIEGYTPPVSEYLSNALATTTYYYLATTSYLGMKSATEQDFEWLSKNPKILEASVIICRVIDDTATYEVEKSRGQIATGIECCMRDYGISTKEAMAKFQNMAETAWKDINEGLLRPTPVSTEFLTPILNLARIVEVTYIHNLDGYTHPEKVLKPHIINLLVDSIKI.

(2E,6E)-farnesyl diphosphate is bound by residues R264, D301, D305, R441, and D444. Positions 301 and 305 each coordinate Mg(2+). Positions 301-305 match the DDXXD motif motif; sequence DDTFD. D444, D445, T448, and E452 together coordinate Mg(2+).

This sequence belongs to the terpene synthase family. In terms of assembly, monomer. Requires Mg(2+) as cofactor. Self-alkylated at Tyr-520 in the presence of (2Z,6E)-farnesyl diphosphate ((Z,E)-FPP). Self-alkylated at Asp-444 at warm temperature (42 degrees Celsius) in the presence of (2E,6E)-farnesyl diphosphate ((E,E)-FPP).

The protein localises to the cytoplasm. It carries out the reaction (2E,6E)-farnesyl diphosphate = (+)-5-epi-aristolochene + diphosphate. The catalysed reaction is (2Z,6E)-farnesyl diphosphate = (+)-2-epi-prezizaene + diphosphate. The enzyme catalyses (2Z,6E)-farnesyl diphosphate = (-)-alpha-cedrene + diphosphate. It catalyses the reaction (2Z,6E)-farnesyl diphosphate = (-)-beta-curcumene + diphosphate. Its pathway is secondary metabolite biosynthesis; terpenoid biosynthesis. Its activity is regulated as follows. Inhibited activity toward farnesyl diphosphate (FPP) by anilinogeranyl diphosphate (AGPP); AGPP undergoes a cyclization event leading to the formation of a novel macrocyclic paracyclophane alkaloid. Repressed by sesquilavandulyl diphosphate (SPP) via the induction of self-alkyation. Its function is as follows. Catalyzes the cyclization of trans,trans-farnesyl diphosphate (FPP) to the bicyclic intermediate 5-epi-aristolochene, initial step in the conversion of FPP to the sesquiterpenoid antifungal phytoalexin capsidiol. Produces germacrene A as an enzyme-bound intermediate that is not released by the enzyme, but is further cyclized to produce the bicyclic 5-epi-aristolochene. Mediates, at low levels, the formation of 4-epi-eremophilene and premnaspirodiene from trans,trans-farnesyl diphosphate. Also mediates the conversion of cis,trans-farnesyl diphosphate to cisoid minor products such as (+)-2-epi-prezizaene, (-)-alpha-cedrene and, to a lesser extent, (-)-beta-curcumene; also produces, at low levels, alpha-acoradiene and 4-epi-alpha-acoradiene, but barely nerolidol, alpha-bisabolol, epi-alpha-bisabolol and cis-farnesol. The chain is 5-epi-aristolochene synthase (EAS3) from Nicotiana tabacum (Common tobacco).